A 438-amino-acid polypeptide reads, in one-letter code: tRNA-2-methylthio-N(6)-dimethylallyladenosine synthase (438 aa).

An MTTase N-terminal domain is found at 4-120 (KKLYIDTVGC…VPEMVKDAEA (117 aa)). C13, C49, C83, C158, C162, and C165 together coordinate [4Fe-4S] cluster. The 234-residue stretch at 144-377 (GRKRVSAFVT…QAVHSRIHNE (234 aa)) folds into the Radical SAM core domain. The TRAM domain maps to 377–438 (ETYVGSTQQV…YANSLLGELL (62 aa)).

It belongs to the methylthiotransferase family. MiaB subfamily. As to quaternary structure, monomer. It depends on [4Fe-4S] cluster as a cofactor.

Its subcellular location is the cytoplasm. It carries out the reaction N(6)-dimethylallyladenosine(37) in tRNA + (sulfur carrier)-SH + AH2 + 2 S-adenosyl-L-methionine = 2-methylsulfanyl-N(6)-dimethylallyladenosine(37) in tRNA + (sulfur carrier)-H + 5'-deoxyadenosine + L-methionine + A + S-adenosyl-L-homocysteine + 2 H(+). Catalyzes the methylthiolation of N6-(dimethylallyl)adenosine (i(6)A), leading to the formation of 2-methylthio-N6-(dimethylallyl)adenosine (ms(2)i(6)A) at position 37 in tRNAs that read codons beginning with uridine. This Trichlorobacter lovleyi (strain ATCC BAA-1151 / DSM 17278 / SZ) (Geobacter lovleyi) protein is tRNA-2-methylthio-N(6)-dimethylallyladenosine synthase.